The chain runs to 610 residues: Pyruvate decarboxylase 1 (610 aa).

2 residues coordinate substrate: D72 and H159. The interval 437 to 519 (DSWFNCQKLR…FLINNGGYTI (83 aa)) is thiamine pyrophosphate binding. 3 residues coordinate Mg(2+): D487, N514, and G516. E520 contributes to the substrate binding site.

Belongs to the TPP enzyme family. As to quaternary structure, homotetramer. It depends on a metal cation as a cofactor. Requires thiamine diphosphate as cofactor.

It catalyses the reaction a 2-oxocarboxylate + H(+) = an aldehyde + CO2. The sequence is that of Pyruvate decarboxylase 1 (PDC1) from Zea mays (Maize).